Reading from the N-terminus, the 217-residue chain is MIIAIDAGHGGQDPGAIGKNKFQEKNITLSIAKKLTKLLNHTNFFKAVMIRRGNYFLSVFKRTQIAEKYHANLLISIHANSSKNRKISGVSIWVLPKNVHNTRIQKHKLNKKTKNIHKKINTKTSKFKNFYEIEYDLAKIIIQELRKVSTLNQKKPKYAKFGILKFSQFPSILVETGFISNPIEEQHLNKKFYQNLISKSISIALKKYFLKRIKQYN.

Positions 3–206 (IAIDAGHGGQ…ISKSISIALK (204 aa)) constitute a MurNAc-LAA domain.

Belongs to the N-acetylmuramoyl-L-alanine amidase 3 family.

It is found in the secreted. The enzyme catalyses Hydrolyzes the link between N-acetylmuramoyl residues and L-amino acid residues in certain cell-wall glycopeptides.. Cell-wall hydrolase involved in septum cleavage during cell division. The protein is Putative N-acetylmuramoyl-L-alanine amidase (amiB) of Buchnera aphidicola subsp. Baizongia pistaciae (strain Bp).